An 823-amino-acid polypeptide reads, in one-letter code: Protein FAM83G (823 aa).

Position 2 is an N-acetylalanine (Ala-2). Positions 2 to 312 (AFSQVQCLDD…LYLMSHSVSL (311 aa)) are DUF1669. Phosphoserine is present on Ser-4. The interval 75–108 (DPGSEDPRGTGPSQGPEDNGVGDGEEASGADGVP) is disordered. 3 positions are modified to phosphoserine: Ser-124, Ser-127, and Ser-356. Residues 450-823 (RDTSQASAQH…AQAPRDRKDP (374 aa)) form a disordered region. Positions 452 to 465 (TSQASAQHQLWKQS) are enriched in polar residues. The span at 497 to 508 (DPEPLPPVPKPR) shows a compositional bias: pro residues. Basic and acidic residues predominate over residues 529–543 (LPKEEAPQNGTDHRL). The span at 578–587 (GVEEEDDDDY) shows a compositional bias: acidic residues. Residues Ser-610, Ser-614, Ser-616, Ser-650, and Ser-666 each carry the phosphoserine modification. 2 stretches are compositionally biased toward basic and acidic residues: residues 672–681 (RGREEADALK) and 809–823 (DSKRRAQAPRDRKDP).

The protein belongs to the FAM83 family. In terms of assembly, interacts with SMAD1 (via MH2 domain); in a SMAD4-independent manner. Directly interacts (via DUF1669) with casein kinase isoforms CSNK1A1 and CSNK1A1L. Post-translationally, phosphorylated in vitro by CSNK1A1. BMP signaling induces the phosphorylation by BMPR1A at Ser-610, Ser-614 and Ser-616. Phosphorylation at Ser-610 is necessary for the activation of SMAD4-independent BMP target genes such as NEDD9 and ASNS.

The protein localises to the cytoplasm. It is found in the cytosol. Its subcellular location is the nucleus. Functionally, substrate for type I BMP receptor kinase involved in regulation of some target genes of the BMP signaling pathway. Also regulates the expression of several non-BMP target genes, suggesting a role in other signaling pathways. The chain is Protein FAM83G (FAM83G) from Homo sapiens (Human).